The chain runs to 313 residues: Intelectin-1b (313 aa).

Residues methionine 1–alanine 19 form the signal peptide. In terms of domain architecture, Fibrinogen C-terminal spans serine 32–cysteine 251. A disulfide bridge connects residues cysteine 41 and cysteine 70. Residues histidine 86, glutamate 87, asparagine 89, glycine 92, glycine 97, aspartate 98, and aspartate 133 each coordinate Ca(2+). 3 disulfides stabilise this stretch: cysteine 94–cysteine 280, cysteine 199–cysteine 259, and cysteine 251–cysteine 265. N-linked (GlcNAc...) asparagine glycosylation is present at asparagine 163. Residues asparagine 260, glutamate 262, glutamate 274, and aspartate 282 each contribute to the Ca(2+) site. A carbohydrate contacts are provided by residues glutamate 262–histidine 263 and glutamate 274. Serine 298 carries the GPI-anchor amidated serine lipid modification. Residues asparagine 299–arginine 313 constitute a propeptide that is removed on maturation.

Expressed in the globlet and Paneth cells of the small intestine of infected mice. Expressed in the ileum of uninfected mice.

Its subcellular location is the cell membrane. It is found in the secreted. Its function is as follows. May play a protective role in the innate immune response to parasite infection. The sequence is that of Intelectin-1b (Itln1b) from Mus musculus (Mouse).